Reading from the N-terminus, the 919-residue chain is DNA double-strand break repair Rad50 ATPase (919 aa).

Residues 33–39 (NGAGKST) and Gln143 contribute to the ATP site. 3 coiled-coil regions span residues 208 to 268 (MTLR…MLVN), 315 to 379 (HEVA…RRYT), and 414 to 458 (ESVL…LEES). In terms of domain architecture, Zinc-hook spans 417–516 (LERLDAVIND…EASRLQDKRR (100 aa)). The Zn(2+) site is built by Cys464 and Cys467. 3 coiled-coil regions span residues 486–515 (EAER…QDKR), 541–595 (EDLA…LQRL), and 635–749 (AYRS…RKAS).

This sequence belongs to the SMC family. RAD50 subfamily. As to quaternary structure, homodimer. Forms a heterotetramer composed of two Mre11 subunits and two Rad50 subunits. Zn(2+) serves as cofactor.

Its function is as follows. Part of the Rad50/Mre11 complex, which is involved in the early steps of DNA double-strand break (DSB) repair. The complex may facilitate opening of the processed DNA ends to aid in the recruitment of HerA and NurA. Rad50 controls the balance between DNA end bridging and DNA resection via ATP-dependent structural rearrangements of the Rad50/Mre11 complex. The chain is DNA double-strand break repair Rad50 ATPase from Aeropyrum pernix (strain ATCC 700893 / DSM 11879 / JCM 9820 / NBRC 100138 / K1).